The following is an 836-amino-acid chain: MFWIAKTLIAFLILLKTDCYKIAIPANLIDEVNPVLEFVDFRVQVIPYETKPLWRIKQESFKIVGISIENGLFSVCNCLILGASAIILPEQYDGHLAAAAIVQSIADNTNVPCVSLHLSPPTRPSTHLHPHLNAKSLAVAAFIKREKWKDVVVVFEEPDELLEITDMITAGHFDPDSFSSQLVRLKHGDDYGNELKHIKNKLDRYRIVINIPLQKALHFLEQAANMSMCGVLYHYVVMDMDLVTVDIDSIRGIEDCNITSFGVHDVNSEYIEDIRQEIVHKSSIRLPKKGVPYTTSIWIDTLRLLIRSMKSIQIWDEPRCGSSWKSGSDIKKRFFENPLAGISGDLHWAPSGERSNYTLHVYRRTLSFQKFAEWSSRTRRIASSEAVVIANSSEKLTLEGKHLKISVYLEAPFVMITSNGSYEGYCIDLLHKIANILKFTYTIQKVRDNAYGSKESNGKWSGMVGELQRGDADLAVASLTISYGRSEVIDFTVPYMHLGISILFKKPRIRDSDWFKFMDPLSTQVWIMTFASYFVVSVAIWIIAKISPYEQFERDEDNGQYKPVDNQFSLRNSFWFTVCSLMQQGSELCPRAASTRLLTGIWWFFALILISSYTANLAAVLTTRRMETPIENADDLAAQTKIKYGTLGRGSTMSFFNESKIETYERMWQLMSSSPGLFVQSSKEGIARVKSSDYAYLMESSMLEYAVERDCELMQIGGLIDQKGYGIGLPKGSPYRELISTAILRLQEKTELTELKEKWWKDKSVVCEQPKRKDQDDGESIGGIFIILVVGLVLTAVLVIFELITTRKPSPAQSQVIRHVNVIPSFKLGFFRWNVN.

An N-terminal signal peptide occupies residues M1 to C19. Residues Y20–T523 are Extracellular-facing. A disulfide bridge links C76 with C320. Residues N225, N257, N356, N391, and N419 are each glycosylated (N-linked (GlcNAc...) asparagine). Residues S478–T480 and R485 each bind L-glutamate. The helical transmembrane segment at Q524 to A544 threads the bilayer. Over K545 to G600 the chain is Cytoplasmic. Residues I601 to L621 traverse the membrane as a helical segment. Over T622–S780 the chain is Extracellular. Position 651–652 (S651–T652) interacts with L-glutamate. A glycan (N-linked (GlcNAc...) asparagine) is linked at N657. Position 699 (E699) interacts with L-glutamate. A helical transmembrane segment spans residues I781–F801. The Cytoplasmic segment spans residues E802 to N836.

It belongs to the glutamate-gated ion channel (TC 1.A.10.1) family. Expressed in the intestine and in the ASER neuron. Also expressed in the thermosensitive RIA interneuron.

The protein localises to the cell membrane. The protein resides in the postsynaptic cell membrane. With respect to regulation, activated by low temperature of 18 degrees Celsius in ASER neuron. In terms of biological role, ionotropic glutamate receptor. Activation by glutamate requires additional verification. L-glutamate acts as an excitatory neurotransmitter at many synapses in the central nervous system. Binding of the excitatory neurotransmitter L-glutamate induces a conformation change, leading to the opening of the cation channel, and thereby converts the chemical signal to an electrical impulse. The receptor then desensitizes rapidly and enters a transient inactive state, characterized by the presence of bound agonist. Functionally, independent of its ionotropic glutamate receptor activity, acts as a thermoreceptor in the ASER neuron where it triggers a calcium response to activate cold avoidance behavior in response to temperatures below 19 degrees Celsius. Possibly functions as a metabotropic cold receptor and acts upstream of the G(o) G protein goa-1 in the ASER neuron. Also functions in cold sensing in the intestine. This Caenorhabditis elegans protein is Glutamate receptor ionotropic, kainate glr-3.